The sequence spans 188 residues: dCTP deaminase (188 aa).

DCTP-binding positions include 111–116, 135–137, Q156, Y170, and Q180; these read KSTYAR and TLE. E137 serves as the catalytic Proton donor/acceptor.

The protein belongs to the dCTP deaminase family. As to quaternary structure, homotrimer.

It catalyses the reaction dCTP + H2O + H(+) = dUTP + NH4(+). The protein operates within pyrimidine metabolism; dUMP biosynthesis; dUMP from dCTP (dUTP route): step 1/2. In terms of biological role, catalyzes the deamination of dCTP to dUTP. This is dCTP deaminase from Pseudomonas syringae pv. tomato (strain ATCC BAA-871 / DC3000).